Here is a 131-residue protein sequence, read N- to C-terminus: Histone H2B.2 (131 aa).

Residues 1–20 are compositionally biased toward basic and acidic residues; sequence MAPPKAEKKPASKAPAEKKP. Positions 1–39 are disordered; the sequence is MAPPKAEKKPASKAPAEKKPAAKKTASSTDAKKRTKTRK. Residues Lys8 and Lys9 each carry the N6-acetyllysine; alternate modification. Glycyl lysine isopeptide (Lys-Gly) (interchain with G-Cter in SUMO); alternate cross-links involve residues Lys8 and Lys9. Phosphoserine is present on Ser12. Lys13 is modified (N6-acetyllysine). Position 18 is an N6-acetyllysine; alternate (Lys18). A Glycyl lysine isopeptide (Lys-Gly) (interchain with G-Cter in SUMO); alternate cross-link involves residue Lys18. Lys19 is covalently cross-linked (Glycyl lysine isopeptide (Lys-Gly) (interchain with G-Cter in SUMO)). A Glycyl lysine isopeptide (Lys-Gly) (interchain with G-Cter in ubiquitin) cross-link involves residue Lys125.

Belongs to the histone H2B family. In terms of assembly, the nucleosome is a histone octamer containing two molecules each of H2A, H2B, H3 and H4 assembled in one H3-H4 heterotetramer and two H2A-H2B heterodimers. The octamer wraps approximately 147 bp of DNA. Post-translationally, monoubiquitinated to form H2BK123ub1. H2BK123ub1 gives a specific tag for epigenetic transcriptional activation and is also prerequisite for H3K4me and H3K79me formation. H2BK123ub1 also modulates the formation of double-strand breaks during meiosis and is a prerequisite for DNA-damage checkpoint activation. Phosphorylated by STE20 to form H2BS10ph during progression through meiotic prophase. May be correlated with chromosome condensation. In terms of processing, acetylated by GCN5 to form H2BK11ac and H2BK16ac. H2BK16ac can also be formed by ESA1. Acetylation of N-terminal lysines and particularly formation of H2BK11acK16ac has a positive effect on transcription. Post-translationally, sumoylation to form H2BK6su or H2BK7su, and probably also H2BK16su or H2BK17su, occurs preferentially near the telomeres and represses gene transcription.

The protein resides in the nucleus. The protein localises to the chromosome. Its function is as follows. Core component of nucleosome. Nucleosomes wrap and compact DNA into chromatin, limiting DNA accessibility to the cellular machineries which require DNA as a template. Histones thereby play a central role in transcription regulation, DNA repair, DNA replication and chromosomal stability. DNA accessibility is regulated via a complex set of post-translational modifications of histones, also called histone code, and nucleosome remodeling. The sequence is that of Histone H2B.2 (HTB2) from Scheffersomyces stipitis (strain ATCC 58785 / CBS 6054 / NBRC 10063 / NRRL Y-11545) (Yeast).